Consider the following 407-residue polypeptide: Imidazolonepropionase (407 aa).

Residues H72 and H74 each contribute to the Fe(3+) site. Zn(2+) contacts are provided by H72 and H74. The 4-imidazolone-5-propanoate site is built by R81, Y144, and H177. Y144 is an N-formimidoyl-L-glutamate binding site. Residue H242 coordinates Fe(3+). H242 is a Zn(2+) binding site. Q245 is a binding site for 4-imidazolone-5-propanoate. D317 is a Fe(3+) binding site. D317 serves as a coordination point for Zn(2+). N-formimidoyl-L-glutamate-binding residues include N319 and G321. T322 is a 4-imidazolone-5-propanoate binding site.

The protein belongs to the metallo-dependent hydrolases superfamily. HutI family. Zn(2+) serves as cofactor. It depends on Fe(3+) as a cofactor.

The protein localises to the cytoplasm. The enzyme catalyses 4-imidazolone-5-propanoate + H2O = N-formimidoyl-L-glutamate. The protein operates within amino-acid degradation; L-histidine degradation into L-glutamate; N-formimidoyl-L-glutamate from L-histidine: step 3/3. Catalyzes the hydrolytic cleavage of the carbon-nitrogen bond in imidazolone-5-propanoate to yield N-formimidoyl-L-glutamate. It is the third step in the universal histidine degradation pathway. The sequence is that of Imidazolonepropionase from Rhizobium rhizogenes (Agrobacterium rhizogenes).